Consider the following 558-residue polypeptide: Glutamine--tRNA ligase (558 aa).

The 'HIGH' region signature appears at 36-46; it reads PEPNGYLHLGH. ATP is bound by residues 37–39 and 43–49; these read EPN and HLGHAKS. L-glutamine contacts are provided by aspartate 69 and tyrosine 214. Residues threonine 233, 263-264, and 271-273 contribute to the ATP site; these read RL and LSK. Residues 270–274 carry the 'KMSKS' region motif; sequence LLSKR.

This sequence belongs to the class-I aminoacyl-tRNA synthetase family. In terms of assembly, monomer.

It is found in the cytoplasm. It carries out the reaction tRNA(Gln) + L-glutamine + ATP = L-glutaminyl-tRNA(Gln) + AMP + diphosphate. This is Glutamine--tRNA ligase from Nitrobacter hamburgensis (strain DSM 10229 / NCIMB 13809 / X14).